Consider the following 1782-residue polypeptide: A-kinase anchor protein 12 (1782 aa).

8 disordered regions span residues 1 to 53, 71 to 169, 189 to 400, 421 to 886, 938 to 1089, 1105 to 1134, 1157 to 1274, and 1305 to 1355; these read MGAG…DPAT, QDEL…QAND, KTEK…APLA, VSTV…ELSE, EREV…LKKE, PFTQGKVVGQTTPESFEKAPQVTESIESSE, AIPP…ADEK, and KGEG…HVNE. Residue G2 is the site of N-myristoyl glycine attachment. A phosphoserine mark is found at S11, S19, S28, S75, and S96. The segment covering 16 to 53 has biased composition (low complexity); the sequence is PEGSSTPAEPEPSGGGPSAEAAPDTTADPAIAASDPAT. A compositionally biased stretch (basic and acidic residues) spans 108–125; it reads GQRDSEDVSKRDSDKEMA. Low complexity predominate over residues 145–154; that stretch reads IIEQIPSSES. A Phosphoserine modification is found at S154. Over residues 157 to 168 the composition is skewed to polar residues; sequence EELTQPTESQAN. 8 positions are modified to phosphoserine: S219, S248, S258, S280, S283, S286, S347, and S371. The segment covering 226–249 has biased composition (basic and acidic residues); the sequence is ASKESEPKQSTEKPEETLKREQSH. Positions 266-557 are involved in PKC-binding; the sequence is KEEGEEKQEK…TQVPADSPDS (292 aa). 2 stretches are compositionally biased toward basic and acidic residues: residues 315–347 and 363–379; these read KPKEDEVEASEKKKEQEPEKVDTEEDGKAEVAS and ESAHEPRLSAEYEKVEL. Y374 carries the phosphotyrosine modification. 2 positions are modified to phosphoserine: S381 and S392. Residues 423 to 435 show a composition bias toward basic and acidic residues; the sequence is TVEERTEEQKTEV. The span at 446–456 shows a compositional bias: acidic residues; sequence ELVEMDAEPQE. Positions 458 to 468 are enriched in basic and acidic residues; the sequence is EPAKELVKLKE. 2 positions are modified to phosphoserine: S483 and S505. Residues 528-537 are compositionally biased toward basic residues; that stretch reads LSGKKQKGKR. Residues S554, S557, S598, S612, S627, and S629 each carry the phosphoserine modification. An AKAP CaM-binding 1 motif is present at residues 607–627; it reads VTPWASFKKMVTPKKRVRRPS. Positions 625 to 639 are enriched in basic and acidic residues; that stretch reads RPSESDKEDELDKVK. Over residues 640 to 652 the composition is skewed to low complexity; it reads SATLSSTESTASE. Position 642 is a phosphothreonine (T642). 4 positions are modified to phosphoserine: S644, S645, S648, and S651. Basic and acidic residues predominate over residues 655 to 674; sequence EEMKGSVEEPKPEEPKRKVD. Phosphoserine is present on residues S696, S697, and S698. A compositionally biased stretch (basic and acidic residues) spans 708–724; it reads GGDHQKADEAGKDKETG. Residues 739–749 are compositionally biased toward polar residues; sequence QGSSSPEQAGS. Residues S749, S761, and S787 each carry the phosphoserine modification. The AKAP CaM-binding 2 signature appears at 756-776; it reads VSTWESFKRLVTPRKKSKSKL. The span at 792–803 shows a compositional bias: basic and acidic residues; it reads STPDTEPGKEES. The short motif at 801–821 is the AKAP CaM-binding 3 element; that stretch reads EESWVSIKKFIPGRRKKRPDG. Position 806 is a phosphoserine (S806). Low complexity predominate over residues 986 to 997; that stretch reads GAEEGTEASAAE. K1051 participates in a covalent cross-link: Glycyl lysine isopeptide (Lys-Gly) (interchain with G-Cter in SUMO1). The span at 1072-1089 shows a compositional bias: basic and acidic residues; sequence AEAERPEEQAEASGLKKE. A compositionally biased stretch (polar residues) spans 1164–1174; the sequence is ETPTDSETDGS. Composition is skewed to basic and acidic residues over residues 1187–1198 and 1231–1251; these read QKDEIVEIHEEN and EETKEQSKMEDTLEHTDKEVS. The segment covering 1253-1267 has biased composition (polar residues); sequence ETVSILSKTEGTQEA. Residues S1328 and S1331 each carry the phosphoserine modification. A compositionally biased stretch (basic and acidic residues) spans 1333–1355; sequence VEREMVVQVEREKTEAEPTHVNE. Phosphoserine occurs at positions 1391 and 1395. The RII-binding stretch occupies residues 1541–1554; the sequence is ELETKSSKLVQNII. The segment at 1584-1782 is disordered; it reads KADSQDAGQE…ESAKSELTES (199 aa). Position 1587 is a phosphoserine (S1587). Positions 1603–1612 are enriched in polar residues; sequence ASAQDETPIT. 2 stretches are compositionally biased toward basic and acidic residues: residues 1629–1639 and 1675–1699; these read DISKDMSEASE and VPEDDGHALLAERIEKSLVEPKEDE. Residue S1727 is modified to Phosphoserine. Basic and acidic residues-rich tracts occupy residues 1734-1757 and 1766-1782; these read KQKEKEDAQEVELQEGKVHSESDK and ELQKQERESAKSELTES.

Binds to dimeric RII-alpha regulatory subunit of PKC. Expressed in endothelial cells, cultured fibroblasts and osteosarcoma, but not in platelets, leukocytes, monocytic cell lines or peripherical blood cells.

It is found in the cytoplasm. The protein localises to the cell cortex. The protein resides in the cytoskeleton. It localises to the membrane. In terms of biological role, anchoring protein that mediates the subcellular compartmentation of protein kinase A (PKA) and protein kinase C (PKC). This chain is A-kinase anchor protein 12 (AKAP12), found in Homo sapiens (Human).